The sequence spans 189 residues: MKLIIGLGNPGKEYSGNRHNVGFQCLSRFAKENHISFDKKCCLSRTGSGRINDEEIVLAKPQTYMNLSGKAVNQLLRRYNLKAADIIVVQDDLDLPAGKLRLRLGGSAGGHNGVSSIITDIGTKEFIRLKIGIGKPDARNNGAEVVDHVLGNFGGEEREIIETAIARAAEALACLITSGLDTASNRFNC.

Tyr14 is a binding site for tRNA. The active-site Proton acceptor is His19. The tRNA site is built by Tyr64, Asn66, and Asn112.

The protein belongs to the PTH family. As to quaternary structure, monomer.

It localises to the cytoplasm. It carries out the reaction an N-acyl-L-alpha-aminoacyl-tRNA + H2O = an N-acyl-L-amino acid + a tRNA + H(+). Its function is as follows. Hydrolyzes ribosome-free peptidyl-tRNAs (with 1 or more amino acids incorporated), which drop off the ribosome during protein synthesis, or as a result of ribosome stalling. Functionally, catalyzes the release of premature peptidyl moieties from peptidyl-tRNA molecules trapped in stalled 50S ribosomal subunits, and thus maintains levels of free tRNAs and 50S ribosomes. The polypeptide is Peptidyl-tRNA hydrolase (Dehalococcoides mccartyi (strain ATCC BAA-2100 / JCM 16839 / KCTC 5957 / BAV1)).